A 119-amino-acid chain; its full sequence is Large ribosomal subunit protein uL22 (119 aa).

The protein belongs to the universal ribosomal protein uL22 family. As to quaternary structure, part of the 50S ribosomal subunit.

Functionally, this protein binds specifically to 23S rRNA; its binding is stimulated by other ribosomal proteins, e.g. L4, L17, and L20. It is important during the early stages of 50S assembly. It makes multiple contacts with different domains of the 23S rRNA in the assembled 50S subunit and ribosome. In terms of biological role, the globular domain of the protein is located near the polypeptide exit tunnel on the outside of the subunit, while an extended beta-hairpin is found that lines the wall of the exit tunnel in the center of the 70S ribosome. This is Large ribosomal subunit protein uL22 from Chlorobium phaeovibrioides (strain DSM 265 / 1930) (Prosthecochloris vibrioformis (strain DSM 265)).